Consider the following 354-residue polypeptide: Glycerol-3-phosphate dehydrogenase [NAD(+)], glycosomal (354 aa).

NAD(+)-binding positions include 15–20 (GSGAFG), F90, K118, and A150. K118 lines the substrate pocket. K203 serves as the catalytic Proton acceptor. NAD(+)-binding residues include R267 and E293. A substrate-binding site is contributed by 267 to 268 (RN). The Microbody targeting signal signature appears at 352–354 (SKM).

This sequence belongs to the NAD-dependent glycerol-3-phosphate dehydrogenase family.

The protein localises to the glycosome. It catalyses the reaction sn-glycerol 3-phosphate + NAD(+) = dihydroxyacetone phosphate + NADH + H(+). This Trypanosoma brucei brucei protein is Glycerol-3-phosphate dehydrogenase [NAD(+)], glycosomal (GPD).